A 461-amino-acid polypeptide reads, in one-letter code: Cysteine--tRNA ligase (461 aa).

Zn(2+) is bound at residue cysteine 30. The short motif at 32 to 42 is the 'HIGH' region element; sequence VTIYDLCHIGH. Zn(2+) is bound by residues cysteine 211, histidine 236, and glutamate 240. The 'KMSKS' region signature appears at 268-272; the sequence is KMSKS. Lysine 271 is an ATP binding site.

It belongs to the class-I aminoacyl-tRNA synthetase family. Monomer. The cofactor is Zn(2+).

It is found in the cytoplasm. It carries out the reaction tRNA(Cys) + L-cysteine + ATP = L-cysteinyl-tRNA(Cys) + AMP + diphosphate. The polypeptide is Cysteine--tRNA ligase (Shewanella putrefaciens (strain CN-32 / ATCC BAA-453)).